A 61-amino-acid polypeptide reads, in one-letter code: Large ribosomal subunit protein bL32 (61 aa).

This sequence belongs to the bacterial ribosomal protein bL32 family.

This Acidithiobacillus ferrooxidans (strain ATCC 23270 / DSM 14882 / CIP 104768 / NCIMB 8455) (Ferrobacillus ferrooxidans (strain ATCC 23270)) protein is Large ribosomal subunit protein bL32.